A 155-amino-acid polypeptide reads, in one-letter code: Ribonuclease H (155 aa).

Positions 1–142 constitute an RNase H type-1 domain; that stretch reads MLKQVEIFTD…CDELARNAAG (142 aa). Aspartate 10, glutamate 48, aspartate 70, and aspartate 134 together coordinate Mg(2+).

The protein belongs to the RNase H family. In terms of assembly, monomer. Requires Mg(2+) as cofactor.

It is found in the cytoplasm. It catalyses the reaction Endonucleolytic cleavage to 5'-phosphomonoester.. Its function is as follows. Endonuclease that specifically degrades the RNA of RNA-DNA hybrids. The chain is Ribonuclease H from Erwinia tasmaniensis (strain DSM 17950 / CFBP 7177 / CIP 109463 / NCPPB 4357 / Et1/99).